We begin with the raw amino-acid sequence, 411 residues long: ACT domain-containing protein ACR9 (411 aa).

ACT domains follow at residues 22-105, 111-194, and 243-322; these read VVTV…NVSK, LLKF…LAGP, and LLQI…VIIV.

Its function is as follows. May bind amino acids. This chain is ACT domain-containing protein ACR9, found in Arabidopsis thaliana (Mouse-ear cress).